A 274-amino-acid chain; its full sequence is NADH-ubiquinone oxidoreductase chain 2 (274 aa).

The next 8 membrane-spanning stretches (helical) occupy residues 28–48 (MIIM…FWFP), 54–74 (LTWM…LMLI), 79–99 (IKYL…IGGL), 107–127 (LMAF…MISE), 128–148 (SIWL…TFMF), 171–191 (FTLF…GFLP), 206–226 (FLLL…LRIC), and 254–274 (LIMT…YFMF).

This sequence belongs to the complex I subunit 2 family.

The protein resides in the mitochondrion inner membrane. It carries out the reaction a ubiquinone + NADH + 5 H(+)(in) = a ubiquinol + NAD(+) + 4 H(+)(out). Core subunit of the mitochondrial membrane respiratory chain NADH dehydrogenase (Complex I) that is believed to belong to the minimal assembly required for catalysis. Complex I functions in the transfer of electrons from NADH to the respiratory chain. The immediate electron acceptor for the enzyme is believed to be ubiquinone. In Drosophila mauritiana (Fruit fly), this protein is NADH-ubiquinone oxidoreductase chain 2 (mt:ND2).